A 482-amino-acid polypeptide reads, in one-letter code: MRNYRSPIGKMTPGVEVDREAPVVRAATVAEGADVAEQHTGVGHQRGARPWPLPRRIATLSVHTSPLHQPGTGDAGGMNVYILEVARRLAEANVEVEIFTRATAADLPPVVEMVPGVHVRHIMSGPLGGLTKEELPGQLCAFTAGVLRAEAVRAAGHYDLIHSHYWLSGQVGWLAKERWGVPLVHTAHTLAKVKNAQLAAGDRPEPKARVIGEEQVVAEADRLVANTKTEAGDLIDRYDADPTRVEVVEPGVDLARFCPASGDRARAQVLARRRLDLPERGYVVAFVGRIQPLKAPDVLIRAAAALRQRDPALADDMTVVVCGGPSGSGLERPTHLIELAAALGITDRVRFLPPQTGDDLPALYRAADLVAVPSYNESFGLVALEAQACGTPVVAAAVGGLNTAVRDEVSGVLVDGHDPVAWARSLGRLLPDAGRRAMLARGAQRHARNFSWDRTVKDLLDVYGEAVAEHRTRLSDFATCSR.

Residue His-63 coordinates 1D-myo-inositol 3-phosphate. UDP-N-acetyl-alpha-D-glucosamine is bound by residues 69-70 and Gly-77; that span reads QP. 1D-myo-inositol 3-phosphate-binding positions include 74 to 79, Lys-132, Tyr-165, Thr-189, and Arg-209; that span reads DAGGMN. Positions 289, 294, and 355 each coordinate UDP-N-acetyl-alpha-D-glucosamine. Residues Tyr-364, Arg-365, and Ala-367 each contribute to the Mg(2+) site. Positions 377 and 385 each coordinate UDP-N-acetyl-alpha-D-glucosamine. Mg(2+) is bound at residue Thr-391.

Belongs to the glycosyltransferase group 1 family. MshA subfamily. As to quaternary structure, homodimer.

The enzyme catalyses 1D-myo-inositol 3-phosphate + UDP-N-acetyl-alpha-D-glucosamine = 1D-myo-inositol 2-acetamido-2-deoxy-alpha-D-glucopyranoside 3-phosphate + UDP + H(+). Catalyzes the transfer of a N-acetyl-glucosamine moiety to 1D-myo-inositol 3-phosphate to produce 1D-myo-inositol 2-acetamido-2-deoxy-glucopyranoside 3-phosphate in the mycothiol biosynthesis pathway. This Salinispora tropica (strain ATCC BAA-916 / DSM 44818 / JCM 13857 / NBRC 105044 / CNB-440) protein is D-inositol 3-phosphate glycosyltransferase.